We begin with the raw amino-acid sequence, 290 residues long: uncharacterized protein (290 aa).

It is found in the cell membrane. The protein localises to the membrane raft. This is an uncharacterized protein from Bacillus subtilis (strain 168).